Here is a 646-residue protein sequence, read N- to C-terminus: MNLRTIARKNILGNLQRYVAYFLSCVFAVSVFFVFTSFIFHPDVNEDNIYGGSLVKTCLSAALVVIIVFCIFFITYSNSAFLQARKKEFGLLTLFGTSKQQLRKMIYYEQSLISLAAIAAGIGAGLLFSKLFFMIMTWMLSVKVPISFAIVPKAFVMTIAGFLILFQTLLILSLGRIRKLEIIELIKSAKKPKSLPVYSKWLTVLSLLCLGSGYYLSATANAIDMMFRVFPILILVLIGTYFFFTQSSVAFFRMLYRKKHSFYKGTNIIVRSNMIFRLKDHARMLFLTSVITAVILTATGVIYMFYSDLQRQEEQSIPQSVSWVEKDASRFQVMKPETAENTLKKAHAVITYKVDATGIPVTFQSDLPYGNKKMEAEALLISEKVYNQVAKEKGFPVIHLQENEAFINVSFQMMVKDTFGEGETAAFHMKSGKTLSYVMKKQQNKGILMSVDGVSRLLVVSEKSFDSLSQDVPLKEQMRMVGYELEHWQETVDVSEKLENMVPKEHTSDFQTRAPSYQIVKQGVALMLFIGLFVSVLFFIVQGSMLYLRMFTEIEDTGVQVLALKRIGVTDKEIHSILGKQIGFLFFIPFIAGTIHAGFAYAALSNMLNSNLFLEAVIVIFIYFVFQALYYIVTRHIYKRAVLQRM.

A run of 10 helical transmembrane segments spans residues 20–40 (AYFLSCVFAVSVFFVFTSFIF), 54–74 (LVKTCLSAALVVIIVFCIFFI), 115–135 (LAAIAAGIGAGLLFSKLFFMI), 154–174 (AFVMTIAGFLILFQTLLILSL), 203–223 (TVLSLLCLGSGYYLSATANAI), 232–252 (ILILVLIGTYFFFTQSSVAFF), 285–305 (LFLTSVITAVILTATGVIYMF), 523–543 (GVALMLFIGLFVSVLFFIVQG), 582–602 (IGFLFFIPFIAGTIHAGFAYA), and 613–633 (FLEAVIVIFIYFVFQALYYIV).

It belongs to the ABC-4 integral membrane protein family.

It localises to the cell membrane. This is an uncharacterized protein from Bacillus subtilis (strain 168).